Here is a 574-residue protein sequence, read N- to C-terminus: Galectin-3-binding protein (574 aa).

A signal peptide spans 1–18 (MALLWLLSVFLLVPGTQG). In terms of domain architecture, SRCR spans 24 to 124 (MRLVNGASAS…HEKDAGVVCS (101 aa)). 3 disulfide bridges follow: Cys-49–Cys-113, Cys-62–Cys-123, and Cys-93–Cys-103. Asn-69, Asn-96, Asn-102, and Asn-125 each carry an N-linked (GlcNAc...) asparagine glycan. A BTB domain is found at 153-221 (CDLFIQVTGQ…FYSRRIEVSM (69 aa)). The BACK domain occupies 260–360 (PLELYEYAQA…MLPQELFELQ (101 aa)). Residues Asn-362, Asn-398, Asn-540, and Asn-569 are each glycosylated (N-linked (GlcNAc...) asparagine).

Homodimers and homomultimers. The multimers form ring-like structures with a diameter of 30-40 nm. Binds LGALS1 and LGALS3. Binds ITGB1, COL4A1, COL5A1, COL6A1, FN1 and NID. The unglycosylated form interacts with PDE4DIP; this interaction, which is PDE4DIP isoform-specific, may connect a pericentrosomal complex to the gamma-tubulin ring complex (gamma-TuRC) to promote microtubule assembly and acetylation. Detected in thyroid (at protein level).

It localises to the secreted. It is found in the extracellular space. The protein localises to the extracellular matrix. Its function is as follows. Promotes integrin-mediated cell adhesion. May stimulate host defense against viruses and tumor cells. In Rattus norvegicus (Rat), this protein is Galectin-3-binding protein (Lgals3bp).